We begin with the raw amino-acid sequence, 549 residues long: Glucose-6-phosphate isomerase (549 aa).

The active-site Proton donor is Glu353. Active-site residues include His384 and Lys512.

This sequence belongs to the GPI family.

It is found in the cytoplasm. The catalysed reaction is alpha-D-glucose 6-phosphate = beta-D-fructose 6-phosphate. It participates in carbohydrate biosynthesis; gluconeogenesis. The protein operates within carbohydrate degradation; glycolysis; D-glyceraldehyde 3-phosphate and glycerone phosphate from D-glucose: step 2/4. In terms of biological role, catalyzes the reversible isomerization of glucose-6-phosphate to fructose-6-phosphate. In Solidesulfovibrio magneticus (strain ATCC 700980 / DSM 13731 / RS-1) (Desulfovibrio magneticus), this protein is Glucose-6-phosphate isomerase.